The following is a 354-amino-acid chain: MGSSIDAETHEVDIKDQAQLWNIIYGYADSLVLRCTVEIGIADIIKNNNGSITLSELVSKLPLSNVNSDNLYRLLRYLVHLNILGQQTCAAGVDRVYSLKPVGTLLLKDSERSMAPVILGLSQKDFLFVWNFVKEGLGTGSTTAFEKAMGMDMWKYLEVNPNQSQLFDEGQAGETRLLTKTLLVDCRDTFQGMDSLVDVGGGNGTTIKAIHEAFPHIKCTLYDLPHVIANSDDHPNILKVPGDMFMSVPSAQVLLLKCVLHDWTDEHCVNILKKCKEAIPKETGKVIIVDVALEEESEHELTKARLILDIDMLVNTGGRERTAEDWENLLKRAGFRSHKIRPIRAIQSVIEAFP.

D223 lines the S-adenosyl-L-methionine pocket. Catalysis depends on H261, which acts as the Proton acceptor.

Belongs to the class I-like SAM-binding methyltransferase superfamily. Cation-independent O-methyltransferase family. COMT subfamily. In terms of tissue distribution, expressed in roots, stems, leaves and flowers. Restricted to sieve elements of the phloem adjacent or proximal to laticifers.

It catalyses the reaction (S)-3'-hydroxy-N-methylcoclaurine + S-adenosyl-L-methionine = (S)-reticuline + S-adenosyl-L-homocysteine + H(+). It participates in alkaloid biosynthesis; (S)-reticuline biosynthesis; (S)-reticuline from (S)-norcoclaurine: step 4/4. Involved in the biosynthesis of benzylisoquinoline alkaloids. Catalyzes the transfer of the methyl group to the 4'-hydroxyl group of 3'-hydroxy-N-methylcoclaurine to form reticuline. Also involved in the papaverine biosynthesis. The protein is 3'-hydroxy-N-methyl-(S)-coclaurine 4'-O-methyltransferase 1 of Papaver somniferum (Opium poppy).